Here is a 142-residue protein sequence, read N- to C-terminus: Transcriptional regulator MraZ (142 aa).

SpoVT-AbrB domains are found at residues Ala-5 to Glu-51 and Ala-77 to Thr-120.

The protein belongs to the MraZ family. As to quaternary structure, forms oligomers.

It localises to the cytoplasm. The protein localises to the nucleoid. This Cupriavidus pinatubonensis (strain JMP 134 / LMG 1197) (Cupriavidus necator (strain JMP 134)) protein is Transcriptional regulator MraZ.